The sequence spans 225 residues: MNSIKFPVLDRTTKNSVISTTLNDLSNWTRLSSLWPLLYGTSCCFIEFASLIGSRFDFDRYGLVPRSSPRQADLILTAGTVTMKMAPSLVRLYEQMPEPKYVIAMGACTITGGMFSTDSYSTVRGVDKLIPVDVYLPGCPPKPEAVIDAITKLRKKIAREIYKDRIRPQQGNRCFTTNHKFFIVRSPHTGNYDQELLYPPSSTSEISTETFFKYKSPVSSHELVN.

Residues C43, C44, C108, and C139 each coordinate [4Fe-4S] cluster.

This sequence belongs to the complex I 20 kDa subunit family. In terms of assembly, NDH is composed of at least 16 different subunits, 5 of which are encoded in the nucleus. [4Fe-4S] cluster serves as cofactor.

The protein resides in the plastid. It localises to the chloroplast thylakoid membrane. The enzyme catalyses a plastoquinone + NADH + (n+1) H(+)(in) = a plastoquinol + NAD(+) + n H(+)(out). It carries out the reaction a plastoquinone + NADPH + (n+1) H(+)(in) = a plastoquinol + NADP(+) + n H(+)(out). In terms of biological role, NDH shuttles electrons from NAD(P)H:plastoquinone, via FMN and iron-sulfur (Fe-S) centers, to quinones in the photosynthetic chain and possibly in a chloroplast respiratory chain. The immediate electron acceptor for the enzyme in this species is believed to be plastoquinone. Couples the redox reaction to proton translocation, and thus conserves the redox energy in a proton gradient. This Capsella bursa-pastoris (Shepherd's purse) protein is NAD(P)H-quinone oxidoreductase subunit K, chloroplastic.